A 1234-amino-acid chain; its full sequence is uncharacterized protein (1234 aa).

This is an uncharacterized protein from Schizosaccharomyces pombe (strain 972 / ATCC 24843) (Fission yeast).